Reading from the N-terminus, the 41-residue chain is Cytochrome b559 subunit beta (41 aa).

The helical transmembrane segment at W16–A32 threads the bilayer. A heme-binding site is contributed by H20.

It belongs to the PsbE/PsbF family. As to quaternary structure, heterodimer of an alpha subunit and a beta subunit. PSII is composed of 1 copy each of membrane proteins PsbA, PsbB, PsbC, PsbD, PsbE, PsbF, PsbH, PsbI, PsbJ, PsbK, PsbL, PsbM, PsbT, PsbX, PsbY, PsbZ, Psb30/Ycf12, at least 3 peripheral proteins of the oxygen-evolving complex and a large number of cofactors. It forms dimeric complexes. The cofactor is heme b.

It localises to the plastid. Its subcellular location is the chloroplast thylakoid membrane. In terms of biological role, this b-type cytochrome is tightly associated with the reaction center of photosystem II (PSII). PSII is a light-driven water:plastoquinone oxidoreductase that uses light energy to abstract electrons from H(2)O, generating O(2) and a proton gradient subsequently used for ATP formation. It consists of a core antenna complex that captures photons, and an electron transfer chain that converts photonic excitation into a charge separation. The sequence is that of Cytochrome b559 subunit beta from Chlorella vulgaris (Green alga).